A 510-amino-acid chain; its full sequence is MLIYILSGLGVLVGALLGYVVAKRNIEKQLLLAKKDAEHIIKDAEKEASEIKKKAVIESREELHKLREEWEKERKEREEEIRYLEERLIKREEMVSKREELLDKKENYVEELRKELDQRQRDLEAKEKELTERFEKLAGITPAQAKEMVLEEAREKYEYEIAKVYSQIKARYEEDSEKYAKKVIADAIQRYAPEYSGEVTVSTIMLPNDDMKGRLIGREGRNIRAFEKVTGVDLIIDDTPEMVTVSCFNPLRREIAKRTIEKLVADGRIHPTRIEEMYEKAKAEVEKIIREAGQEATFVTGVGGLHPEIIKLLGRLKFRTSYGQNVLNHSIEVALIAGLIASELGVNVEKAKRGGLLHDIGKALDHEVEGSHTVIGAEILRRYGESREIINMVMAHHGEEEPVTPEAVIVAAADALSAARPGARREDVENYIKRLIKLEEIAKSFKYVENAYAIQAGREVRVIVQPDKIDDVLADKLSHDIAIKIEEELQYPGVLKVVVIREKRSVAYAK.

The helical transmembrane segment at 1 to 21 threads the bilayer; the sequence is MLIYILSGLGVLVGALLGYVV. The KH domain maps to 200-260; sequence TVSTIMLPND…LRREIAKRTI (61 aa). Residues 326-419 form the HD domain; it reads VLNHSIEVAL…VAAADALSAA (94 aa).

The protein belongs to the RNase Y family.

The protein resides in the cell membrane. Functionally, endoribonuclease that initiates mRNA decay. This is Ribonuclease Y from Thermosipho melanesiensis (strain DSM 12029 / CIP 104789 / BI429).